The primary structure comprises 124 residues: Histone H2A (124 aa).

Residues 1-18 are compositionally biased toward basic residues; that stretch reads MSGRGKGGKAKGKSKTRS. Residues 1 to 23 form a disordered region; the sequence is MSGRGKGGKAKGKSKTRSSRAGL. N-acetylserine is present on Ser-2. Position 2 is a phosphoserine (Ser-2). An N5-methylglutamine modification is found at Gln-104.

This sequence belongs to the histone H2A family. The nucleosome is a histone octamer containing two molecules each of H2A, H2B, H3 and H4 assembled in one H3-H4 heterotetramer and two H2A-H2B heterodimers. The octamer wraps approximately 147 bp of DNA. In terms of processing, phosphorylation of Ser-2 directly represses transcription.

The protein resides in the nucleus. Its subcellular location is the chromosome. Core component of nucleosome. Nucleosomes wrap and compact DNA into chromatin, limiting DNA accessibility to the cellular machineries which require DNA as a template. Histones thereby play a central role in transcription regulation, DNA repair, DNA replication and chromosomal stability. DNA accessibility is regulated via a complex set of post-translational modifications of histones, also called histone code, and nucleosome remodeling. This is Histone H2A from Platynereis dumerilii (Dumeril's clam worm).